A 347-amino-acid chain; its full sequence is NADH-ubiquinone oxidoreductase chain 2 (347 aa).

11 helical membrane passes run 3–23 (PMTSTILLMTIMSGTSIVLMS), 25–45 (HWFMTWLGFEMNMMAIIPILM), 59–79 (YFLTQATASMILVLAIIINLM), 96–116 (TLITIALVMKLGLAPFHFWVP), 122–142 (VSLSSGLILLTWQKIAPLSLL), 149–169 (INTNLLLTMSLLSIMIGGWGG), 178–198 (IMAYSSIAHMGWMIVIMIYNP), 200–220 (LSLLNLFIYIMMTSSMFMLLI), 240–260 (ITTMMMATLLSLGGLPPLTGF), 274–294 (NSVILPTLMAILALLNLFFYM), and 326–346 (MTMLISISTLALPLTPLFISL).

It belongs to the complex I subunit 2 family. In terms of assembly, core subunit of respiratory chain NADH dehydrogenase (Complex I) which is composed of 45 different subunits. Interacts with TMEM242.

Its subcellular location is the mitochondrion inner membrane. The enzyme catalyses a ubiquinone + NADH + 5 H(+)(in) = a ubiquinol + NAD(+) + 4 H(+)(out). Functionally, core subunit of the mitochondrial membrane respiratory chain NADH dehydrogenase (Complex I) which catalyzes electron transfer from NADH through the respiratory chain, using ubiquinone as an electron acceptor. Essential for the catalytic activity and assembly of complex I. The sequence is that of NADH-ubiquinone oxidoreductase chain 2 from Sylvisorex granti (Grant's forest shrew).